Here is a 228-residue protein sequence, read N- to C-terminus: Elongation factor 1-beta 1 (228 aa).

Position 2 is an N-acetylalanine (A2). The GST C-terminal domain occupies 14-65 (LKTLEEHLAGKTYISGDQLSVDDVKVYAAVLENPGDGFPNASKWYDSVASHL). The segment at 75–139 (GVRVGGGVAP…DTKKTKESGK (65 aa)) is disordered. The span at 95–115 (PAADGDGDDDDDIDLFADETE) shows a compositional bias: acidic residues. Residues 116–138 (DEKKAAEEREAAKKDTKKTKESG) are compositionally biased toward basic and acidic residues.

Belongs to the EF-1-beta/EF-1-delta family. As to quaternary structure, EF-1 is composed of 4 subunits: alpha, beta (1B-alpha=beta'), delta (1B-beta), and gamma (1B-gamma).

Its subcellular location is the cell membrane. EF-1-beta and EF-1-delta stimulate the exchange of GDP bound to EF-1-alpha to GTP. The protein is Elongation factor 1-beta 1 of Arabidopsis thaliana (Mouse-ear cress).